A 31-amino-acid polypeptide reads, in one-letter code: Cyclotide Hyfl-A (31 aa).

Residues 1–31 (SISCGESCVYIPCTVTALVGCTCKDKVCYLN) constitute a cross-link (cyclopeptide (Ser-Asn)). 3 disulfide bridges follow: cysteine 4–cysteine 21, cysteine 8–cysteine 23, and cysteine 13–cysteine 28.

Belongs to the cyclotide family. Bracelet subfamily. In terms of processing, this is a cyclic peptide.

Functionally, probably participates in a plant defense mechanism. The polypeptide is Cyclotide Hyfl-A (Hybanthus floribundus (Greenviolet)).